Consider the following 188-residue polypeptide: Ribosome-recycling factor (188 aa).

Belongs to the RRF family.

The protein resides in the cytoplasm. Functionally, responsible for the release of ribosomes from messenger RNA at the termination of protein biosynthesis. May increase the efficiency of translation by recycling ribosomes from one round of translation to another. The protein is Ribosome-recycling factor of Blochmanniella pennsylvanica (strain BPEN).